A 579-amino-acid polypeptide reads, in one-letter code: Carboxysome shell carbonic anhydrase (579 aa).

Residues 72-95 form a disordered region; the sequence is GGGRVRSARDQRQPGWVRRDKGAT. Positions 78-93 are enriched in basic and acidic residues; it reads SARDQRQPGWVRRDKG. Zn(2+) is bound at residue Cys-240. The active-site Proton acceptor is Asp-242. His-308 and Cys-319 together coordinate Zn(2+).

This sequence belongs to the beta-class carbonic anhydrase family. CsoSCA subfamily. Homodimer. Zn(2+) serves as cofactor.

The protein resides in the carboxysome. It catalyses the reaction hydrogencarbonate + H(+) = CO2 + H2O. Inhibited by dithiothreitol, partially inhibited by acetatzolamide and cyanide. Reversible hydration of carbon dioxide. Essential for photosynthetic carbon dioxide fixation, supplies CO(2) to RuBisCO (ribulose bisphosphate carboxylase, cbbL-cbbS) in the carboxysome. In Parasynechococcus marenigrum (strain WH8102), this protein is Carboxysome shell carbonic anhydrase.